A 249-amino-acid polypeptide reads, in one-letter code: DNA repair protein RecO (249 aa).

This sequence belongs to the RecO family.

Its function is as follows. Involved in DNA repair and RecF pathway recombination. The polypeptide is DNA repair protein RecO (Polaromonas sp. (strain JS666 / ATCC BAA-500)).